We begin with the raw amino-acid sequence, 383 residues long: Succinyl-diaminopimelate desuccinylase (383 aa).

H73 is a binding site for Zn(2+). The active site involves D75. Residue D107 participates in Zn(2+) binding. The active-site Proton acceptor is E141. Zn(2+) is bound by residues E142, E170, and H356.

The protein belongs to the peptidase M20A family. DapE subfamily. As to quaternary structure, homodimer. It depends on Zn(2+) as a cofactor. Requires Co(2+) as cofactor.

It carries out the reaction N-succinyl-(2S,6S)-2,6-diaminopimelate + H2O = (2S,6S)-2,6-diaminopimelate + succinate. The protein operates within amino-acid biosynthesis; L-lysine biosynthesis via DAP pathway; LL-2,6-diaminopimelate from (S)-tetrahydrodipicolinate (succinylase route): step 3/3. Catalyzes the hydrolysis of N-succinyl-L,L-diaminopimelic acid (SDAP), forming succinate and LL-2,6-diaminopimelate (DAP), an intermediate involved in the bacterial biosynthesis of lysine and meso-diaminopimelic acid, an essential component of bacterial cell walls. The polypeptide is Succinyl-diaminopimelate desuccinylase (Pseudomonas aeruginosa (strain ATCC 15692 / DSM 22644 / CIP 104116 / JCM 14847 / LMG 12228 / 1C / PRS 101 / PAO1)).